A 55-amino-acid polypeptide reads, in one-letter code: Ferredoxin (55 aa).

4Fe-4S ferredoxin-type domains are found at residues 2–27 (YFITDACISCGACESECPVSPISPGD) and 28–55 (SVYVIDADACIECGACANVCPVDAPQQK). [4Fe-4S] cluster contacts are provided by Cys8, Cys11, Cys14, Cys18, Cys37, Cys40, Cys43, and Cys47.

Requires [4Fe-4S] cluster as cofactor.

Ferredoxins are iron-sulfur proteins that transfer electrons in a wide variety of metabolic reactions. The chain is Ferredoxin from Acetivibrio thermocellus (Hungateiclostridium thermocellum).